The following is a 381-amino-acid chain: Protein-glutamate methylesterase/protein-glutamine glutaminase (381 aa).

The region spanning 20 to 138 (RVMVVDDSVV…EIAAADIFKH (119 aa)) is the Response regulatory domain. Residue D71 is modified to 4-aspartylphosphate. Positions 154 to 176 (PAALASAREPEPRPIQATPVPAH) are disordered. Positions 183-373 (PFSTHAPRAL…PLQQIAPKLV (191 aa)) constitute a CheB-type methylesterase domain. Catalysis depends on residues S197, H225, and D321.

Belongs to the CheB family. Post-translationally, phosphorylated by CheA. Phosphorylation of the N-terminal regulatory domain activates the methylesterase activity.

The protein localises to the cytoplasm. The enzyme catalyses [protein]-L-glutamate 5-O-methyl ester + H2O = L-glutamyl-[protein] + methanol + H(+). It carries out the reaction L-glutaminyl-[protein] + H2O = L-glutamyl-[protein] + NH4(+). Involved in chemotaxis. Part of a chemotaxis signal transduction system that modulates chemotaxis in response to various stimuli. Catalyzes the demethylation of specific methylglutamate residues introduced into the chemoreceptors (methyl-accepting chemotaxis proteins or MCP) by CheR. Also mediates the irreversible deamidation of specific glutamine residues to glutamic acid. The polypeptide is Protein-glutamate methylesterase/protein-glutamine glutaminase (Nitrobacter hamburgensis (strain DSM 10229 / NCIMB 13809 / X14)).